We begin with the raw amino-acid sequence, 471 residues long: V-type ATP synthase beta chain (471 aa).

The protein belongs to the ATPase alpha/beta chains family.

In terms of biological role, produces ATP from ADP in the presence of a proton gradient across the membrane. The V-type beta chain is a regulatory subunit. The protein is V-type ATP synthase beta chain of Streptococcus pyogenes serotype M28 (strain MGAS6180).